A 220-amino-acid chain; its full sequence is MTWSDILAEEKQQPYFKQILDFLACESANGKVIFPAKENIFNAFKYTELDNLKVVILGQDPYHNYNQAHGLAFSVQKGVDIPPSLQNIYKELARSIPEFKIPNHGYLVDWAKQGVFLLNTTLTVEAHKANSHKDIGWETFTDTVISKISENKHNVVFMLWGSHARKKKVLIDSSRHLILESTHPSPLSAHRGFLGCNHFVDCNKYLIEKKSQKIDWNLLC.

D60 (proton acceptor) is an active-site residue.

It belongs to the uracil-DNA glycosylase (UDG) superfamily. UNG family.

The protein resides in the cytoplasm. It carries out the reaction Hydrolyzes single-stranded DNA or mismatched double-stranded DNA and polynucleotides, releasing free uracil.. Functionally, excises uracil residues from the DNA which can arise as a result of misincorporation of dUMP residues by DNA polymerase or due to deamination of cytosine. This Francisella tularensis subsp. novicida (strain U112) protein is Uracil-DNA glycosylase.